Consider the following 486-residue polypeptide: NADH-quinone oxidoreductase subunit N (486 aa).

The next 14 membrane-spanning stretches (helical) occupy residues 14–34 (SIAP…LNFI), 45–65 (MLAI…SGIV), 77–97 (FAFI…PLTL), 105–125 (CSLA…EFMV), 130–150 (LIVI…LIAL), 163–183 (YFTM…IFYL), 203–223 (ILIA…LSLI), 237–257 (SEVM…IVAM), 268–288 (IAFI…LANI), 299–319 (MLAF…VIGT), 326–346 (LFLY…VLWF), 377–397 (FLMA…VFWG), 409–429 (GFIF…YYYL), and 459–479 (FIIT…KFWT).

The protein belongs to the complex I subunit 2 family. In terms of assembly, NDH-1 is composed of 14 different subunits. Subunits NuoA, H, J, K, L, M, N constitute the membrane sector of the complex.

The protein localises to the cell inner membrane. The catalysed reaction is a quinone + NADH + 5 H(+)(in) = a quinol + NAD(+) + 4 H(+)(out). NDH-1 shuttles electrons from NADH, via FMN and iron-sulfur (Fe-S) centers, to quinones in the respiratory chain. The immediate electron acceptor for the enzyme in this species is believed to be ubiquinone. Couples the redox reaction to proton translocation (for every two electrons transferred, four hydrogen ions are translocated across the cytoplasmic membrane), and thus conserves the redox energy in a proton gradient. The polypeptide is NADH-quinone oxidoreductase subunit N (Campylobacter hominis (strain ATCC BAA-381 / DSM 21671 / CCUG 45161 / LMG 19568 / NCTC 13146 / CH001A)).